A 1425-amino-acid chain; its full sequence is Protein NAP1 (1425 aa).

Polar residues-rich tracts occupy residues 1–20 (MANS…PTSV), 1299–1312 (TPLS…SPSV), and 1320–1329 (SMKNSTTPQR). Disordered regions lie at residues 1-24 (MANS…RSRE) and 1299-1425 (TPLS…KQHN). Positions 1362–1405 (SETGNSRNNENNNNNKQRGSSRRSGPLDYSSSHKGGSGSNSTGP) are enriched in low complexity.

This sequence belongs to the HEM-1/HEM-2 family. As to quaternary structure, binds PIR. Expressed in roots, root hairs, hypocotyls, cotyledons, stems, leaves, trichomes, and flowers.

In terms of biological role, involved in regulation of actin and microtubule organization. Part of a WAVE complex that activates the Arp2/3 complex. This Arabidopsis thaliana (Mouse-ear cress) protein is Protein NAP1 (NAP1).